The sequence spans 200 residues: Histone H1 (200 aa).

Residues 1–14 show a composition bias toward low complexity; sequence MPPKKAPTTAKKAA. 2 disordered regions span residues 1-20 and 78-200; these read MPPKKAPTTAKKAASGPTHT and DFIQ…NKKA. One can recognise an H15 domain in the interval 18–93; that stretch reads THTSYRDMIK…GTSGPVKLAK (76 aa). A compositionally biased stretch (low complexity) spans 94 to 116; that stretch reads KQAPAKPAPKKPATTTKTAAPKK. A compositionally biased stretch (basic and acidic residues) spans 120–131; the sequence is KKADKAEKAEKP. Residues 159–185 show a composition bias toward low complexity; it reads TAAPAVVDKPKVVSVTKSGRKTTTTAK.

The protein belongs to the histone H1/H5 family.

Its subcellular location is the nucleus. It localises to the chromosome. Functionally, could act as an H1-type linker histone. The polypeptide is Histone H1 (hhoA) (Emericella nidulans (strain FGSC A4 / ATCC 38163 / CBS 112.46 / NRRL 194 / M139) (Aspergillus nidulans)).